The primary structure comprises 115 residues: Large ribosomal subunit protein uL18 (115 aa).

It belongs to the universal ribosomal protein uL18 family. As to quaternary structure, part of the 50S ribosomal subunit; part of the 5S rRNA/L5/L18/L25 subcomplex. Contacts the 5S and 23S rRNAs.

Functionally, this is one of the proteins that bind and probably mediate the attachment of the 5S RNA into the large ribosomal subunit, where it forms part of the central protuberance. This is Large ribosomal subunit protein uL18 from Rickettsia rickettsii (strain Iowa).